Here is a 424-residue protein sequence, read N- to C-terminus: Elongator complex protein 4 (424 aa).

The protein belongs to the ELP4 family. Component of the elongator complex which consists of ELP1, ELP2, ELP3, ELP4, ELP5 and ELP6. Widely expressed.

The protein localises to the cytoplasm. The protein resides in the nucleus. The protein operates within tRNA modification; 5-methoxycarbonylmethyl-2-thiouridine-tRNA biosynthesis. Functionally, component of the elongator complex which is required for multiple tRNA modifications, including mcm5U (5-methoxycarbonylmethyl uridine), mcm5s2U (5-methoxycarbonylmethyl-2-thiouridine), and ncm5U (5-carbamoylmethyl uridine). The elongator complex catalyzes the formation of carboxymethyluridine in the wobble base at position 34 in tRNAs. The protein is Elongator complex protein 4 (ELP4) of Homo sapiens (Human).